Here is a 465-residue protein sequence, read N- to C-terminus: Phenylalanine--tRNA ligase alpha subunit (465 aa).

L-phenylalanine is bound by residues Thr-311 and Phe-389. Glu-391 contacts Mg(2+).

Belongs to the class-II aminoacyl-tRNA synthetase family. Phe-tRNA synthetase alpha subunit type 2 subfamily. As to quaternary structure, tetramer of two alpha and two beta subunits. Requires Mg(2+) as cofactor.

The protein resides in the cytoplasm. It carries out the reaction tRNA(Phe) + L-phenylalanine + ATP = L-phenylalanyl-tRNA(Phe) + AMP + diphosphate + H(+). This is Phenylalanine--tRNA ligase alpha subunit from Metallosphaera sedula (strain ATCC 51363 / DSM 5348 / JCM 9185 / NBRC 15509 / TH2).